The sequence spans 259 residues: Beta-glucanase (259 aa).

Positions 1–31 (MVKSKYLVFISVFSLLFGVFVVGFSHQGVKA) are cleaved as a signal peptide. Residues 35-255 (RPMGTAFYES…WVRYTPLQNY (221 aa)) form the GH16 domain. E142 functions as the Nucleophile in the catalytic mechanism. E146 serves as the catalytic Proton donor.

It belongs to the glycosyl hydrolase 16 family.

It carries out the reaction Hydrolysis of (1-&gt;4)-beta-D-glucosidic linkages in beta-D-glucans containing (1-&gt;3)- and (1-&gt;4)-bonds.. Functionally, hydrolyzes B-glucans containing mixed beta-1,3 and beta-1,4 linkages. This chain is Beta-glucanase (bglBB), found in Brevibacillus brevis (Bacillus brevis).